We begin with the raw amino-acid sequence, 229 residues long: Putative N-acetylmannosamine-6-phosphate 2-epimerase (229 aa).

It belongs to the NanE family.

It carries out the reaction an N-acyl-D-glucosamine 6-phosphate = an N-acyl-D-mannosamine 6-phosphate. Its pathway is amino-sugar metabolism; N-acetylneuraminate degradation; D-fructose 6-phosphate from N-acetylneuraminate: step 3/5. Its function is as follows. Converts N-acetylmannosamine-6-phosphate (ManNAc-6-P) to N-acetylglucosamine-6-phosphate (GlcNAc-6-P). The sequence is that of Putative N-acetylmannosamine-6-phosphate 2-epimerase from Shigella dysenteriae serotype 1 (strain Sd197).